We begin with the raw amino-acid sequence, 150 residues long: D-aminoacyl-tRNA deacylase (150 aa).

Residues 138–139 (GP) carry the Gly-cisPro motif, important for rejection of L-amino acids motif.

Belongs to the DTD family. Homodimer.

Its subcellular location is the cytoplasm. It carries out the reaction glycyl-tRNA(Ala) + H2O = tRNA(Ala) + glycine + H(+). The enzyme catalyses a D-aminoacyl-tRNA + H2O = a tRNA + a D-alpha-amino acid + H(+). An aminoacyl-tRNA editing enzyme that deacylates mischarged D-aminoacyl-tRNAs. Also deacylates mischarged glycyl-tRNA(Ala), protecting cells against glycine mischarging by AlaRS. Acts via tRNA-based rather than protein-based catalysis; rejects L-amino acids rather than detecting D-amino acids in the active site. By recycling D-aminoacyl-tRNA to D-amino acids and free tRNA molecules, this enzyme counteracts the toxicity associated with the formation of D-aminoacyl-tRNA entities in vivo and helps enforce protein L-homochirality. The chain is D-aminoacyl-tRNA deacylase from Phocaeicola vulgatus (strain ATCC 8482 / DSM 1447 / JCM 5826 / CCUG 4940 / NBRC 14291 / NCTC 11154) (Bacteroides vulgatus).